Here is a 288-residue protein sequence, read N- to C-terminus: Damage-control phosphatase AF_1104 (288 aa).

The Subfamily I CxxC motif signature appears at 7–10 (CPSC). 3 residues coordinate Mn(2+): Asp-160, Asn-161, and Asp-194. The Subfamily I GNFE-like motif signature appears at 247 to 250 (ANYE). The Subfamily I KC motif signature appears at 267–268 (KC).

The protein belongs to the damage-control phosphatase family. Nucleotides phosphatase I subfamily. The cofactor is [2Fe-2S] cluster. It depends on Mn(2+) as a cofactor. Requires Ni(2+) as cofactor.

In terms of biological role, metal-dependent phosphatase with probable damage-control functions. Could hydrolyze oxidatively damaged purine nucleotides or their biosynthetic intermediates. This is Damage-control phosphatase AF_1104 from Archaeoglobus fulgidus (strain ATCC 49558 / DSM 4304 / JCM 9628 / NBRC 100126 / VC-16).